The following is a 148-amino-acid chain: Trypsin inhibitor CMe (148 aa).

The N-terminal stretch at 1–24 (MAFKYQLLLSAAVMLAILVATATS) is a signal peptide.

This sequence belongs to the protease inhibitor I6 (cereal trypsin/alpha-amylase inhibitor) family. Five disulfide bonds, which are essential for the inhibitor activity, are probably present. As to expression, expressed in the developing endosperm. Not detected in embryo, aleurone, coleoptile, roots and leaves.

It is found in the secreted. Inhibits trypsin in vitro. Probably plays a protective role through inhibition of insect midgut proteases. In Hordeum vulgare (Barley), this protein is Trypsin inhibitor CMe (ITR1).